The chain runs to 277 residues: Caspase-3 (277 aa).

Methionine 1 carries the post-translational modification N-acetylmethionine. 2 propeptides span residues 1 to 9 (MENNKTSVD) and 10 to 28 (SKSI…KSMD). N6-acetyllysine is present on lysine 11. The residue at position 26 (serine 26) is a Phosphoserine. Catalysis depends on residues histidine 121 and cysteine 163. Cysteine 163 bears the S-nitrosocysteine; in inhibited form mark.

The protein belongs to the peptidase C14A family. In terms of assembly, heterotetramer that consists of two anti-parallel arranged heterodimers, each one formed by a 17 kDa (p17) and a 12 kDa (p12) subunit. Interacts with BIRC6/bruce. (Microbial infection) Subunit p17 interacts with African swine fever virus (ASFV) inhibitor of apoptosis protein. Post-translationally, cleavage by granzyme B, caspase-6, caspase-8 and caspase-10 generates the two active subunits. Additional processing of the propeptides is likely due to the autocatalytic activity of the activated protease. Active heterodimers between the small subunit of caspase-7 protease and the large subunit of caspase-3 also occur and vice versa. In terms of processing, S-nitrosylated on its catalytic site cysteine in unstimulated cell lines and denitrosylated upon activation of the Fas apoptotic pathway, associated with an increase in intracellular caspase activity. Fas therefore activates caspase-3 not only by inducing the cleavage of the caspase zymogen to its active subunits, but also by stimulating the denitrosylation of its active site thiol. Ubiquitinated by BIRC6; this activity is inhibited by DIABLO/SMAC.

The protein localises to the cytoplasm. The enzyme catalyses Strict requirement for an Asp residue at positions P1 and P4. It has a preferred cleavage sequence of Asp-Xaa-Xaa-Asp-|- with a hydrophobic amino-acid residue at P2 and a hydrophilic amino-acid residue at P3, although Val or Ala are also accepted at this position.. Inhibited by BIRC6; following inhibition of BIRC6-caspase binding by DIABLO/SMAC, BIRC6 is subjected to caspase cleavage, leading to an increase in active caspases. Its function is as follows. Involved in the activation cascade of caspases responsible for apoptosis execution. At the onset of apoptosis, it proteolytically cleaves poly(ADP-ribose) polymerase PARP1 at a '216-Asp-|-Gly-217' bond. Cleaves and activates sterol regulatory element binding proteins (SREBPs) between the basic helix-loop-helix leucine zipper domain and the membrane attachment domain. Cleaves and activates caspase-6, -7 and -9 (CASP6, CASP7 and CASP9, respectively). Cleaves and inactivates interleukin-18 (IL18). Triggers cell adhesion in sympathetic neurons through RET cleavage. Cleaves IL-1 beta between an Asp and an Ala, releasing the mature cytokine which is involved in a variety of inflammatory processes. Cleaves and inhibits serine/threonine-protein kinase AKT1 in response to oxidative stress. Acts as an inhibitor of type I interferon production during virus-induced apoptosis by mediating cleavage of antiviral proteins CGAS, IRF3 and MAVS, thereby preventing cytokine overproduction. Also involved in pyroptosis by mediating cleavage and activation of gasdermin-E (GSDME). Cleaves XRCC4 and phospholipid scramblase proteins XKR4, XKR8 and XKR9, leading to promote phosphatidylserine exposure on apoptotic cell surface. Cleaves BIRC6 following inhibition of BIRC6-caspase binding by DIABLO/SMAC. The sequence is that of Caspase-3 (CASP3) from Sus scrofa (Pig).